Reading from the N-terminus, the 160-residue chain is Large ribosomal subunit protein uL22c (160 aa).

The protein belongs to the universal ribosomal protein uL22 family. In terms of assembly, part of the 50S ribosomal subunit.

It is found in the plastid. The protein resides in the chloroplast. Its function is as follows. This protein binds specifically to 23S rRNA. The globular domain of the protein is located near the polypeptide exit tunnel on the outside of the subunit, while an extended beta-hairpin is found that lines the wall of the exit tunnel in the center of the 70S ribosome. This Nasturtium officinale (Watercress) protein is Large ribosomal subunit protein uL22c (rpl22).